The primary structure comprises 149 residues: Deoxyuridine 5'-triphosphate nucleotidohydrolase (149 aa).

Substrate is bound by residues 68–70 (RSG), Asn-81, 85–87 (LID), and Met-95.

This sequence belongs to the dUTPase family. It depends on Mg(2+) as a cofactor.

The catalysed reaction is dUTP + H2O = dUMP + diphosphate + H(+). It participates in pyrimidine metabolism; dUMP biosynthesis; dUMP from dCTP (dUTP route): step 2/2. Functionally, this enzyme is involved in nucleotide metabolism: it produces dUMP, the immediate precursor of thymidine nucleotides and it decreases the intracellular concentration of dUTP so that uracil cannot be incorporated into DNA. This chain is Deoxyuridine 5'-triphosphate nucleotidohydrolase, found in Bordetella avium (strain 197N).